The chain runs to 245 residues: Folate receptor gamma (245 aa).

An N-terminal signal peptide occupies residues M1 to A22. Intrachain disulfides connect C37–C65, C57–C105, C66–C109, C89–C175, C96–C146, C135–C209, C139–C189, and C152–C169. Residues D103 and Y107 each coordinate folate. N121 is a glycosylation site (N-linked (GlcNAc...) asparagine). Residues W124–R128, H157–W162, and S196 each bind folate. The N-linked (GlcNAc...) asparagine glycan is linked to N161. N201 carries an N-linked (GlcNAc...) asparagine glycan.

The protein belongs to the folate receptor family. In terms of tissue distribution, spleen, thymus, bone marrow, ovarian carcinoma, and uterine carcinoma.

It localises to the secreted. Its function is as follows. Binds to folate and reduced folic acid derivatives and mediates delivery of 5-methyltetrahydrofolate to the interior of cells. Isoform Short does not bind folate. This Homo sapiens (Human) protein is Folate receptor gamma (FOLR3).